The primary structure comprises 282 residues: Lipoyl synthase (282 aa).

Cys37, Cys42, Cys48, Cys63, Cys67, Cys70, and Ser275 together coordinate [4Fe-4S] cluster. Residues 49-264 form the Radical SAM core domain; that stretch reads WSRGTATFMI…RLVGIEKGFR (216 aa).

It belongs to the radical SAM superfamily. Lipoyl synthase family. [4Fe-4S] cluster serves as cofactor.

Its subcellular location is the cytoplasm. The enzyme catalyses [[Fe-S] cluster scaffold protein carrying a second [4Fe-4S](2+) cluster] + N(6)-octanoyl-L-lysyl-[protein] + 2 oxidized [2Fe-2S]-[ferredoxin] + 2 S-adenosyl-L-methionine + 4 H(+) = [[Fe-S] cluster scaffold protein] + N(6)-[(R)-dihydrolipoyl]-L-lysyl-[protein] + 4 Fe(3+) + 2 hydrogen sulfide + 2 5'-deoxyadenosine + 2 L-methionine + 2 reduced [2Fe-2S]-[ferredoxin]. Its pathway is protein modification; protein lipoylation via endogenous pathway; protein N(6)-(lipoyl)lysine from octanoyl-[acyl-carrier-protein]: step 2/2. Its function is as follows. Catalyzes the radical-mediated insertion of two sulfur atoms into the C-6 and C-8 positions of the octanoyl moiety bound to the lipoyl domains of lipoate-dependent enzymes, thereby converting the octanoylated domains into lipoylated derivatives. This Porphyromonas gingivalis (strain ATCC 33277 / DSM 20709 / CIP 103683 / JCM 12257 / NCTC 11834 / 2561) protein is Lipoyl synthase.